A 191-amino-acid chain; its full sequence is Transposon Tn1546 resolvase (191 aa).

Positions 2–138 (RKIGYIRVSS…EGIELAKKEG (137 aa)) constitute a Resolvase/invertase-type recombinase catalytic domain. The active-site O-(5'-phospho-DNA)-serine intermediate is the Ser-10. Residues 168 to 187 (VNQICEITNVSRASLYRKLS) constitute a DNA-binding region (H-T-H motif).

It belongs to the site-specific recombinase resolvase family.

In terms of biological role, resolvase catalyzes the resolution (a site-specific recombination) of the cointegrated replicon to yield the final transposition products. This chain is Transposon Tn1546 resolvase, found in Enterococcus faecium (Streptococcus faecium).